An 89-amino-acid polypeptide reads, in one-letter code: Large ribosomal subunit protein bL27 (89 aa).

Residues 1 to 21 (MAHKKAGGSSRNGRDSESKRL) form a disordered region.

Belongs to the bacterial ribosomal protein bL27 family.

This chain is Large ribosomal subunit protein bL27, found in Brucella anthropi (strain ATCC 49188 / DSM 6882 / CCUG 24695 / JCM 21032 / LMG 3331 / NBRC 15819 / NCTC 12168 / Alc 37) (Ochrobactrum anthropi).